The sequence spans 855 residues: MTDLSQHTPMMQQYWKLKNQHLDQLMFYRMGDFYEIFYEDAKKAAKLLDITLTARGQSAGQSIPMCGIPYHAAEGYLAKLVKLGESVVICEQIGDPATSKGPVDRQVVRIITPGTISDEALLDERRDNLIAAVLGDERLFGLAVLDITSGNFSVLEIKGWENLLAELERINPVELLIPDDWPQGLPAEKRRGARRRAPWDFERDSAHKSLCQQFSTQDLKGFGCETLTLAIGAAGCLLGYAKETQRTALPHLRSLRHERLDDTVILDAASRRNLELDTNLSGGRDNTLQSVMDRCQTAMGTRLLTRWLNRPLRDLSILQARQTSITCFLERYRFENLQPQLKEIGDIERILARIGLRNARPRDLARLRDALSALPELQQAMTDLDAPHLQQLAQTASTYPELADLLQRAINDNPPAVIRDGGVLKTGYDAELDELQSLSENAGQFLIDLEAREKARTGLSHLKVGYNRVHGYFIELPSKQAEQAPADYIRRQTLKGAERFITPELKEFEDKALSAKSRALAREKMLYETLLEDLIGHLAPLQDTAAALAELDVLSNLAERALNLDLNCPRFVAEPCMRIEQGRHPVVEQVLSTPFVANDLALDDSTRMLIITGPNMGGKSTYMRQTALIVLLAHIGSFVPAASCELSLVDRIFTRIGSSDDLAGGRSTFMVEMSETANILHNATDKSLVLMDEVGRGTSTFDGLSLAWAAAECLAQLRAYTLFATHYFELTVLPESEPLVNNVHLNATEHNERIVFLHRVLPGPASQSYGLAVAQLAGVPGKVITRAKEHLQRLETTSLPHEQPRAKPGKPAIPQQSDMFASLPHPVLDELSKIKVDDMTPRQALDLLYTLQTRL.

An ATP-binding site is contributed by 613–620 (GPNMGGKS). A disordered region spans residues 796–817 (TTSLPHEQPRAKPGKPAIPQQS).

Belongs to the DNA mismatch repair MutS family.

Functionally, this protein is involved in the repair of mismatches in DNA. It is possible that it carries out the mismatch recognition step. This protein has a weak ATPase activity. The protein is DNA mismatch repair protein MutS of Pseudomonas syringae pv. tomato (strain ATCC BAA-871 / DC3000).